A 265-amino-acid chain; its full sequence is Phosphonates import ATP-binding protein PhnC (265 aa).

One can recognise an ABC transporter domain in the interval 18–262; sequence LVVEHLRKEY…HLKQIYGGEE (245 aa). 51–58 is an ATP binding site; that stretch reads GPSGTGKS.

The protein belongs to the ABC transporter superfamily. Phosphonates importer (TC 3.A.1.9.1) family. The complex is composed of two ATP-binding proteins (PhnC), two transmembrane proteins (PhnE) and a solute-binding protein (PhnD).

It is found in the cell inner membrane. The enzyme catalyses phosphonate(out) + ATP + H2O = phosphonate(in) + ADP + phosphate + H(+). Part of the ABC transporter complex PhnCDE involved in phosphonates import. Responsible for energy coupling to the transport system. This chain is Phosphonates import ATP-binding protein PhnC, found in Nitratidesulfovibrio vulgaris (strain ATCC 29579 / DSM 644 / CCUG 34227 / NCIMB 8303 / VKM B-1760 / Hildenborough) (Desulfovibrio vulgaris).